The following is a 457-amino-acid chain: Siroheme synthase (457 aa).

The segment at 1 to 204 (MDHLPIFCQL…NDQKAITETT (204 aa)) is precorrin-2 dehydrogenase /sirohydrochlorin ferrochelatase. Residues 22–23 (DV) and 43–44 (LA) each bind NAD(+). Ser-128 is modified (phosphoserine). A uroporphyrinogen-III C-methyltransferase region spans residues 216 to 457 (GEVVLVGAGP…RDKLNWFSNH (242 aa)). Residue Pro-225 coordinates S-adenosyl-L-methionine. The active-site Proton acceptor is Asp-248. The active-site Proton donor is Lys-270. S-adenosyl-L-methionine contacts are provided by residues 301–303 (GGD), Ile-306, 331–332 (TA), Met-382, and Gly-411.

The protein in the N-terminal section; belongs to the precorrin-2 dehydrogenase / sirohydrochlorin ferrochelatase family. It in the C-terminal section; belongs to the precorrin methyltransferase family.

The enzyme catalyses uroporphyrinogen III + 2 S-adenosyl-L-methionine = precorrin-2 + 2 S-adenosyl-L-homocysteine + H(+). The catalysed reaction is precorrin-2 + NAD(+) = sirohydrochlorin + NADH + 2 H(+). It carries out the reaction siroheme + 2 H(+) = sirohydrochlorin + Fe(2+). It functions in the pathway cofactor biosynthesis; adenosylcobalamin biosynthesis; precorrin-2 from uroporphyrinogen III: step 1/1. Its pathway is cofactor biosynthesis; adenosylcobalamin biosynthesis; sirohydrochlorin from precorrin-2: step 1/1. The protein operates within porphyrin-containing compound metabolism; siroheme biosynthesis; precorrin-2 from uroporphyrinogen III: step 1/1. It participates in porphyrin-containing compound metabolism; siroheme biosynthesis; siroheme from sirohydrochlorin: step 1/1. It functions in the pathway porphyrin-containing compound metabolism; siroheme biosynthesis; sirohydrochlorin from precorrin-2: step 1/1. Its function is as follows. Multifunctional enzyme that catalyzes the SAM-dependent methylations of uroporphyrinogen III at position C-2 and C-7 to form precorrin-2 via precorrin-1. Then it catalyzes the NAD-dependent ring dehydrogenation of precorrin-2 to yield sirohydrochlorin. Finally, it catalyzes the ferrochelation of sirohydrochlorin to yield siroheme. In Escherichia coli (strain 55989 / EAEC), this protein is Siroheme synthase.